A 107-amino-acid polypeptide reads, in one-letter code: Inner membrane protein YiaW (107 aa).

The Cytoplasmic portion of the chain corresponds to 1–6 (MFLDYF). The chain crosses the membrane as a helical span at residues 7–29 (ALGVLIFVFLVIFYGIIILHDIP). Topologically, residues 30–43 (YLIAKKRNHPHADA) are periplasmic. Residues 44-66 (IHVAGWVSLFTLHVIWPFLWIWA) form a helical membrane-spanning segment. Topologically, residues 67-107 (TLYRPERGWGMQSHDSSVMQLQQRIAGLEKQLADIKSSSAE) are cytoplasmic.

This sequence to E.coli YibI.

The protein localises to the cell inner membrane. The chain is Inner membrane protein YiaW (yiaW) from Escherichia coli O157:H7.